Reading from the N-terminus, the 438-residue chain is POU domain, class 3, transcription factor 3-A (438 aa).

Disordered stretches follow at residues 22–43 (VHSE…SVSG), 102–172 (SPWS…QSQQ), and 186–248 (GMLN…PTSD). Polar residues-rich tracts occupy residues 103 to 123 (PWSS…VKSS) and 146 to 159 (QSHQ…TASH). Residues 160–172 (ISTITGGQQQSQQ) are compositionally biased toward low complexity. Residues 210–230 (HHHHHHHQQQHPHHHHHHQHH) are compositionally biased toward basic residues. Residues 242–316 (EDTPTSDDLE…LLNKWLEEAD (75 aa)) enclose the POU-specific domain. Positions 334–393 (KRKKRTSIEVSVKGALESHFLKCPKPSAQEITSLADNLQLEKEVVRVWFCNRRQKEKRMT) form a DNA-binding region, homeobox.

Belongs to the POU transcription factor family. Class-3 subfamily. As to expression, predominantly expressed in the embryonic and adult central nervous system. In adults, isoform 2 is expressed in the brain, ovary, basal cells of the skin and muscle satellite cells.

It is found in the nucleus. Its function is as follows. Transcription factor that may play important roles in patterning the embryonic brain. The sequence is that of POU domain, class 3, transcription factor 3-A (pou3f3a) from Danio rerio (Zebrafish).